We begin with the raw amino-acid sequence, 291 residues long: HTH-type transcriptional activator AmpR (291 aa).

The HTH lysR-type domain occupies 6 to 63 (LPLNSLRAFEAAARHLSFTHAAIELNVTHSAISQHVKTLEQHLNCQLFVRVSRGLMLT). Residues 23–42 (FTHAAIELNVTHSAISQHVK) constitute a DNA-binding region (H-T-H motif).

This sequence belongs to the LysR transcriptional regulatory family.

The protein resides in the cytoplasm. Functionally, this protein is a positive regulator of gene expression of cephalosporinase (AmpC). This Enterobacter cloacae protein is HTH-type transcriptional activator AmpR (ampR).